Here is a 729-residue protein sequence, read N- to C-terminus: Fatty acid oxidation complex subunit alpha (729 aa).

The segment at 1–189 (MLYKGDTLYL…KIGLVDGVVK (189 aa)) is enoyl-CoA hydratase/isomerase. Position 296 (D296) interacts with substrate. Residues 311–729 (ETPKQAAVLG…ARPVGDLKTA (419 aa)) are 3-hydroxyacyl-CoA dehydrogenase. NAD(+) contacts are provided by residues M324, D343, 400–402 (IVE), K407, and S429. H450 serves as the catalytic For 3-hydroxyacyl-CoA dehydrogenase activity. N453 lines the NAD(+) pocket. Substrate-binding residues include N500 and Y660. The tract at residues 708–729 (RHNEPYYPPVEPARPVGDLKTA) is disordered.

This sequence in the N-terminal section; belongs to the enoyl-CoA hydratase/isomerase family. It in the C-terminal section; belongs to the 3-hydroxyacyl-CoA dehydrogenase family. In terms of assembly, heterotetramer of two alpha chains (FadB) and two beta chains (FadA).

It carries out the reaction a (3S)-3-hydroxyacyl-CoA + NAD(+) = a 3-oxoacyl-CoA + NADH + H(+). The enzyme catalyses a (3S)-3-hydroxyacyl-CoA = a (2E)-enoyl-CoA + H2O. It catalyses the reaction a 4-saturated-(3S)-3-hydroxyacyl-CoA = a (3E)-enoyl-CoA + H2O. The catalysed reaction is (3S)-3-hydroxybutanoyl-CoA = (3R)-3-hydroxybutanoyl-CoA. It carries out the reaction a (3Z)-enoyl-CoA = a 4-saturated (2E)-enoyl-CoA. The enzyme catalyses a (3E)-enoyl-CoA = a 4-saturated (2E)-enoyl-CoA. It participates in lipid metabolism; fatty acid beta-oxidation. Involved in the aerobic and anaerobic degradation of long-chain fatty acids via beta-oxidation cycle. Catalyzes the formation of 3-oxoacyl-CoA from enoyl-CoA via L-3-hydroxyacyl-CoA. It can also use D-3-hydroxyacyl-CoA and cis-3-enoyl-CoA as substrate. The sequence is that of Fatty acid oxidation complex subunit alpha from Escherichia coli O157:H7.